A 437-amino-acid polypeptide reads, in one-letter code: Glycogen synthase (437 aa).

K15 lines the ADP-alpha-D-glucose pocket.

The protein belongs to the glycosyltransferase 1 family. Bacterial/plant glycogen synthase subfamily.

It catalyses the reaction [(1-&gt;4)-alpha-D-glucosyl](n) + ADP-alpha-D-glucose = [(1-&gt;4)-alpha-D-glucosyl](n+1) + ADP + H(+). Its pathway is glycan biosynthesis; glycogen biosynthesis. In terms of biological role, synthesizes alpha-1,4-glucan chains using ADP-glucose. This chain is Glycogen synthase, found in Thermus thermophilus (strain ATCC BAA-163 / DSM 7039 / HB27).